Reading from the N-terminus, the 82-residue chain is Photosystem I iron-sulfur center (82 aa).

4Fe-4S ferredoxin-type domains lie at 2-31 and 40-69; these read AHSV…MVPW and IAAA…IRVY. The [4Fe-4S] cluster site is built by Cys-11, Cys-14, Cys-17, Cys-21, Cys-49, Cys-52, Cys-55, and Cys-59.

As to quaternary structure, the cyanobacterial PSI reaction center is composed of one copy each of PsaA,B,C,D,E,F,I,J,K,L,M and X, and forms trimeric complexes. [4Fe-4S] cluster serves as cofactor.

The protein resides in the cellular thylakoid membrane. It catalyses the reaction reduced [plastocyanin] + hnu + oxidized [2Fe-2S]-[ferredoxin] = oxidized [plastocyanin] + reduced [2Fe-2S]-[ferredoxin]. In terms of biological role, apoprotein for the two 4Fe-4S centers FA and FB of photosystem I (PSI); essential for photochemical activity. FB is the terminal electron acceptor of PSI, donating electrons to ferredoxin. The C-terminus interacts with PsaA/B/D and helps assemble the protein into the PSI complex. Required for binding of PsaD and PsaE to PSI. PSI is a plastocyanin/cytochrome c6-ferredoxin oxidoreductase, converting photonic excitation into a charge separation, which transfers an electron from the donor P700 chlorophyll pair to the spectroscopically characterized acceptors A0, A1, FX, FA and FB in turn. This Synechococcus sp. (strain JA-2-3B'a(2-13)) (Cyanobacteria bacterium Yellowstone B-Prime) protein is Photosystem I iron-sulfur center.